We begin with the raw amino-acid sequence, 219 residues long: Octanoyltransferase (219 aa).

The BPL/LPL catalytic domain occupies 32 to 207 (SSSPDQLWIV…TFSHNLGYQN (176 aa)). Substrate is bound by residues 71 to 78 (RGGQVTYH), 138 to 140 (SLG), and 151 to 153 (GLA). The Acyl-thioester intermediate role is filled by C169.

It belongs to the LipB family.

It localises to the cytoplasm. It carries out the reaction octanoyl-[ACP] + L-lysyl-[protein] = N(6)-octanoyl-L-lysyl-[protein] + holo-[ACP] + H(+). It participates in protein modification; protein lipoylation via endogenous pathway; protein N(6)-(lipoyl)lysine from octanoyl-[acyl-carrier-protein]: step 1/2. Functionally, catalyzes the transfer of endogenously produced octanoic acid from octanoyl-acyl-carrier-protein onto the lipoyl domains of lipoate-dependent enzymes. Lipoyl-ACP can also act as a substrate although octanoyl-ACP is likely to be the physiological substrate. The chain is Octanoyltransferase from Shewanella woodyi (strain ATCC 51908 / MS32).